The sequence spans 361 residues: MTVSTAQMRFWSPEVRELEPYVPGEQPKIQNLLKLNTNENPYPPSPKVVEAVQEVLHEQADVLRLYPDPDATVLKQAIAKQQNIDVSQVFVGNGSDEVLAHIFKAFFLQDGPILYPDITYSFYPVYSQFFGTKTKEIPLNENFEIDVRDYTQPNGGVIITNPNAPTSIALSLAEIEQVLQANPDRVVVIDEAYVDFGAESAVSLINRYENLVVCQTTSKSRSLAGLRVGFAIAQSHLIAALEAVKNSFNSYPIDRFAIAAAVASFEDQAYFEEQCQKVITSREKLVRDLTELGFNVLPSKANFIFATHSQHDAGQLAQKLREQGIIVRYFNKPRINQFLRITVGTNEQNARLVQTLKQDIL.

The residue at position 219 (K219) is an N6-(pyridoxal phosphate)lysine.

This sequence belongs to the class-II pyridoxal-phosphate-dependent aminotransferase family. Histidinol-phosphate aminotransferase subfamily. As to quaternary structure, homodimer. Pyridoxal 5'-phosphate is required as a cofactor.

It catalyses the reaction L-histidinol phosphate + 2-oxoglutarate = 3-(imidazol-4-yl)-2-oxopropyl phosphate + L-glutamate. The protein operates within amino-acid biosynthesis; L-histidine biosynthesis; L-histidine from 5-phospho-alpha-D-ribose 1-diphosphate: step 7/9. The sequence is that of Histidinol-phosphate aminotransferase from Acinetobacter baumannii (strain ACICU).